Consider the following 171-residue polypeptide: 2-C-methyl-D-erythritol 2,4-cyclodiphosphate synthase (171 aa).

2 residues coordinate a divalent metal cation: D8 and H10. 4-CDP-2-C-methyl-D-erythritol 2-phosphate is bound by residues 8–10 and 34–35; these read DVH and HS. H42 lines the a divalent metal cation pocket. 4-CDP-2-C-methyl-D-erythritol 2-phosphate is bound by residues 56–58, 61–65, 132–135, F139, and R142; these read DIG, FPDTD, and TTTE.

This sequence belongs to the IspF family. Homotrimer. Requires a divalent metal cation as cofactor.

The catalysed reaction is 4-CDP-2-C-methyl-D-erythritol 2-phosphate = 2-C-methyl-D-erythritol 2,4-cyclic diphosphate + CMP. It functions in the pathway isoprenoid biosynthesis; isopentenyl diphosphate biosynthesis via DXP pathway; isopentenyl diphosphate from 1-deoxy-D-xylulose 5-phosphate: step 4/6. In terms of biological role, involved in the biosynthesis of isopentenyl diphosphate (IPP) and dimethylallyl diphosphate (DMAPP), two major building blocks of isoprenoid compounds. Catalyzes the conversion of 4-diphosphocytidyl-2-C-methyl-D-erythritol 2-phosphate (CDP-ME2P) to 2-C-methyl-D-erythritol 2,4-cyclodiphosphate (ME-CPP) with a corresponding release of cytidine 5-monophosphate (CMP). The protein is 2-C-methyl-D-erythritol 2,4-cyclodiphosphate synthase of Geotalea daltonii (strain DSM 22248 / JCM 15807 / FRC-32) (Geobacter daltonii).